A 21-amino-acid chain; its full sequence is Trypsin (21 aa).

A propeptide spans 1-7 (FPIEEDK) (activation peptide). The region spanning 8-21 (IVGGYECPKHXVPW) is the Peptidase S1 domain.

It belongs to the peptidase S1 family.

Its subcellular location is the secreted. It is found in the extracellular space. The enzyme catalyses Preferential cleavage: Arg-|-Xaa, Lys-|-Xaa.. The protein is Trypsin of Protopterus aethiopicus (Marbled lungfish).